The primary structure comprises 456 residues: MPPGPWESCFWVGGLLLWLSVGSSGDAPPTPQPNCADFQSANLFEGTDLKVQFLLFVPSNPSCGQLVEGSSDLQNSGFNATLGTKLIIHGFRVLGTKPSWIDKFIRTLLLATNANVIAVDWIYGSTGVYFSAVKNVIKLSLEISLFLNKLLVLGVSESSIHIIGVSLGAHVGGMVGQLFGGQLGQITGLDPAGPEYTRASVEERLDAGDALFVEAIHTDTDNLGIRIPVGHVDYFVNGGQDQPGCPTFFYAGYSYLICDHMRAVHLYISALENSCPLMAFPCASYKAFLAGRCLDCFNPFLLSCPRIGLVEQGGVKIEPLPKEVKVYLLTTSSAPYCMHHSLVEFHLKELRNKDTNIEVTFLSSNVTSSSKITIPKQQRYGKGIIAHATPQCQINQVKFKFQSSNRVWKKDRTTIIGKFCTALLPVNDREKMVCLPEPVNLQASVTVSRDLNLACV.

The signal sequence occupies residues 1 to 25 (MPPGPWESCFWVGGLLLWLSVGSSG). The active-site Nucleophile is the Ser-166. Asp-190 acts as the Charge relay system in catalysis. A disulfide bridge connects residues Cys-245 and Cys-258. His-260 acts as the Charge relay system in catalysis. Disulfide bonds link Cys-282-Cys-293 and Cys-296-Cys-304. An N-linked (GlcNAc...) asparagine glycan is attached at Asn-365.

It belongs to the AB hydrolase superfamily. Lipase family.

It is found in the secreted. The enzyme catalyses a 1,2-diacyl-sn-glycero-3-phospho-L-serine + H2O = a 2-acyl-sn-glycero-3-phospho-L-serine + a fatty acid + H(+). The catalysed reaction is 1,2-di-(9Z)-octadecenoyl-sn-glycero-3-phospho-L-serine + H2O = 2-(9Z-octadecenoyl)-sn-glycero-3-phospho-L-serine + (9Z)-octadecenoate + H(+). It catalyses the reaction 1-hexadecanoyl-2-(5Z,8Z,11Z,14Z-eicosatetraenoyl)-sn-glycero-3-phospho-L-serine + H2O = 2-(5Z,8Z,11Z,14Z)-eicosatetraenoyl-sn-glycero-3-phospho-L-serine + hexadecanoate + H(+). It carries out the reaction a 1-acyl-sn-glycero-3-phospho-L-serine + H2O = sn-glycero-3-phospho-L-serine + a fatty acid + H(+). The enzyme catalyses 1-(9Z-octadecenoyl)-sn-glycero-3-phospho-L-serine + H2O = sn-glycero-3-phospho-L-serine + (9Z)-octadecenoate + H(+). Its function is as follows. Hydrolyzes the ester bond of the acyl group attached at the sn-1 position of phosphatidylserines (phospholipase A1 activity) and 1-acyl-2-lysophosphatidylserines (lysophospholipase activity) in the pathway of phosphatidylserines acyl chain remodeling. Cleaves phosphatidylserines exposed on the outer leaflet of the plasma membrane of apoptotic cells producing 2-acyl-1-lysophosphatidylserines, which in turn enhance mast cell activation and histamine production. Has no activity toward other glycerophospholipids including phosphatidylcholines, phosphatidylethanolamines, phosphatidic acids or phosphatidylinositols, or glycerolipids such as triolein. In Pongo abelii (Sumatran orangutan), this protein is Phospholipase A1 member A (PLA1A).